The sequence spans 306 residues: tRNA pseudouridine synthase B (306 aa).

The active-site Nucleophile is aspartate 43.

This sequence belongs to the pseudouridine synthase TruB family. Type 1 subfamily.

The catalysed reaction is uridine(55) in tRNA = pseudouridine(55) in tRNA. In terms of biological role, responsible for synthesis of pseudouridine from uracil-55 in the psi GC loop of transfer RNAs. The protein is tRNA pseudouridine synthase B of Syntrophobacter fumaroxidans (strain DSM 10017 / MPOB).